The following is a 96-amino-acid chain: Putative toxin Y4kP (96 aa).

Belongs to the RelE toxin family.

In terms of biological role, toxic component of a type II toxin-antitoxin (TA) system. The chain is Putative toxin Y4kP from Sinorhizobium fredii (strain NBRC 101917 / NGR234).